We begin with the raw amino-acid sequence, 460 residues long: UDP-N-acetylmuramoylalanine--D-glutamate ligase (460 aa).

Residue 120–126 coordinates ATP; the sequence is GSNGKTT.

It belongs to the MurCDEF family.

Its subcellular location is the cytoplasm. It carries out the reaction UDP-N-acetyl-alpha-D-muramoyl-L-alanine + D-glutamate + ATP = UDP-N-acetyl-alpha-D-muramoyl-L-alanyl-D-glutamate + ADP + phosphate + H(+). It functions in the pathway cell wall biogenesis; peptidoglycan biosynthesis. In terms of biological role, cell wall formation. Catalyzes the addition of glutamate to the nucleotide precursor UDP-N-acetylmuramoyl-L-alanine (UMA). This is UDP-N-acetylmuramoylalanine--D-glutamate ligase from Lactobacillus delbrueckii subsp. bulgaricus (strain ATCC 11842 / DSM 20081 / BCRC 10696 / JCM 1002 / NBRC 13953 / NCIMB 11778 / NCTC 12712 / WDCM 00102 / Lb 14).